The chain runs to 101 residues: Small ribosomal subunit protein uS14 (101 aa).

It belongs to the universal ribosomal protein uS14 family. In terms of assembly, part of the 30S ribosomal subunit. Contacts proteins S3 and S10.

Functionally, binds 16S rRNA, required for the assembly of 30S particles and may also be responsible for determining the conformation of the 16S rRNA at the A site. This is Small ribosomal subunit protein uS14 from Ectopseudomonas mendocina (strain ymp) (Pseudomonas mendocina).